The sequence spans 950 residues: Protocadherin alpha-8 (950 aa).

Residues 1–29 (MVYHWRGDLGSWRLLLLLLLLAAWKVGSG) form the signal peptide. Cadherin domains follow at residues 30-133 (QLHY…PPVF), 157-242 (ASDA…APNF), 243-350 (EQSE…VPEI), 351-455 (ALTS…APAF), 456-565 (AQPE…APAL), and 581-678 (VPRS…APKA). The Extracellular portion of the chain corresponds to 30 to 697 (QLHYSVPEEA…GPEAALVDVN (668 aa)). Residues asparagine 257 and asparagine 265 are each glycosylated (N-linked (GlcNAc...) asparagine). Asparagine 548 is a glycosylation site (N-linked (GlcNAc...) asparagine). The chain crosses the membrane as a helical span at residues 698-718 (VYLIIAICAVSSLLVLTLLLY). Residues 719 to 950 (TALRCSALPT…GNSTTDNSDQ (232 aa)) are Cytoplasmic-facing. PXXP repeat units lie at residues 774–777 (PCLP), 799–802 (PRQP), 832–835 (PGGP), 873–876 (PGNP), and 891–894 (PGSP). The segment at 774–894 (PCLPPDLGSV…PDKFIIPGSP (121 aa)) is 5 X 4 AA repeats of P-X-X-P. Residues 831-950 (GPGGPDQQWP…GNSTTDNSDQ (120 aa)) are disordered. Basic and acidic residues predominate over residues 909–923 (DKSDFITFGKKEETK).

It is found in the cell membrane. Its function is as follows. Potential calcium-dependent cell-adhesion protein. May be involved in the establishment and maintenance of specific neuronal connections in the brain. The protein is Protocadherin alpha-8 (PCDHA8) of Pan troglodytes (Chimpanzee).